Here is a 629-residue protein sequence, read N- to C-terminus: Dapper homolog 3 (629 aa).

The residue at position 6 (serine 6) is a Phosphoserine. Disordered stretches follow at residues 50-76 (PGMGGAEAEDEEDADEDEDAAAARRAA) and 105-574 (GGLE…GGLV). Residues 56 to 69 (EAEDEEDADEDEDA) are compositionally biased toward acidic residues. A coiled-coil region spans residues 63-87 (ADEDEDAAAARRAAAALEEQLEALP). Over residues 105–150 (GGLEQESGRSSGFYEDPSSTGGPDSPPSTFCGDSGFSGSSSYGRLG) the composition is skewed to low complexity. 2 positions are modified to phosphoserine: serine 165 and serine 239. An Omega-N-methylarginine modification is found at arginine 258. Residues 301–311 (PAREPSLERVG) show a composition bias toward basic and acidic residues. Residues 316–335 (SPAALSRAWASSWESEAAPE) show a composition bias toward low complexity. A compositionally biased stretch (pro residues) spans 336–348 (PAAPPAAPSPPDS). 2 positions are modified to phosphoserine: serine 426 and serine 478. Over residues 525-535 (SAGRLGPLGRR) the composition is skewed to low complexity. Positions 536–546 (GPAGGVGGGYG) are enriched in gly residues. The span at 547-568 (ESESSASEGESPAFSSASSDSD) shows a compositional bias: low complexity. A PDZ-binding motif is present at residues 626–629 (MTTV).

Belongs to the dapper family. As to quaternary structure, can form homodimers and heterodimers with DACT1 or DACT3. Interacts with CSNK1D, PKA catalytic subunit, PKC-type kinase, DVL1, DVL3, VANGL1, VANGL2 and CTNND1. Interacts with DVL2.

Its function is as follows. May be involved in regulation of intracellular signaling pathways during development. Specifically thought to play a role in canonical and/or non-canonical Wnt signaling pathways through interaction with DSH (Dishevelled) family proteins. The sequence is that of Dapper homolog 3 (DACT3) from Homo sapiens (Human).